The sequence spans 551 residues: Probable aldehyde dehydrogenase (551 aa).

NAD(+) is bound at residue 278-283 (GSSRVA). Glu-297 acts as the Proton acceptor in catalysis. Catalysis depends on Cys-332, which acts as the Nucleophile.

The protein belongs to the aldehyde dehydrogenase family. In terms of tissue distribution, in uninfected plants, highest levels found in stems. In plants infected with the flax rust, highest levels in leaves. Higher levels of expression in infected leaves than uninfected stems.

The catalysed reaction is an aldehyde + NAD(+) + H2O = a carboxylate + NADH + 2 H(+). In terms of biological role, could be involved in facilitating the biotrophic relationship between the plant and the rust fungus. This is Probable aldehyde dehydrogenase (FIS1) from Linum usitatissimum (Flax).